The chain runs to 350 residues: Small ribosomal subunit biogenesis GTPase RsgA (350 aa).

The interval 1–30 is disordered; the sequence is MSKRKLTQNQQRRIQSNNAKTLHRHQHRHK. The segment covering 7-20 has biased composition (polar residues); that stretch reads TQNQQRRIQSNNAK. The segment covering 21 to 30 has biased composition (basic residues); the sequence is TLHRHQHRHK. One can recognise a CP-type G domain in the interval 106–274; the sequence is HNQIVRPDYY…LIDSPGIREF (169 aa). GTP contacts are provided by residues 162 to 165 and 216 to 224; these read NKAD and GQSGVGKSS. 4 residues coordinate Zn(2+): C298, C303, H305, and C311.

This sequence belongs to the TRAFAC class YlqF/YawG GTPase family. RsgA subfamily. In terms of assembly, monomer. Associates with 30S ribosomal subunit, binds 16S rRNA. The cofactor is Zn(2+).

It is found in the cytoplasm. Functionally, one of several proteins that assist in the late maturation steps of the functional core of the 30S ribosomal subunit. Helps release RbfA from mature subunits. May play a role in the assembly of ribosomal proteins into the subunit. Circularly permuted GTPase that catalyzes slow GTP hydrolysis, GTPase activity is stimulated by the 30S ribosomal subunit. In Histophilus somni (strain 2336) (Haemophilus somnus), this protein is Small ribosomal subunit biogenesis GTPase RsgA.